A 336-amino-acid chain; its full sequence is Aspartate carbamoyltransferase catalytic subunit (336 aa).

Residues Arg71 and Thr72 each coordinate carbamoyl phosphate. L-aspartate is bound at residue Lys99. Residues Arg121, His151, and Gln154 each coordinate carbamoyl phosphate. L-aspartate-binding residues include Arg184 and Arg239. Carbamoyl phosphate contacts are provided by Gly280 and Pro281.

This sequence belongs to the aspartate/ornithine carbamoyltransferase superfamily. ATCase family. As to quaternary structure, heterododecamer (2C3:3R2) of six catalytic PyrB chains organized as two trimers (C3), and six regulatory PyrI chains organized as three dimers (R2).

It carries out the reaction carbamoyl phosphate + L-aspartate = N-carbamoyl-L-aspartate + phosphate + H(+). It functions in the pathway pyrimidine metabolism; UMP biosynthesis via de novo pathway; (S)-dihydroorotate from bicarbonate: step 2/3. Its function is as follows. Catalyzes the condensation of carbamoyl phosphate and aspartate to form carbamoyl aspartate and inorganic phosphate, the committed step in the de novo pyrimidine nucleotide biosynthesis pathway. The protein is Aspartate carbamoyltransferase catalytic subunit of Azotobacter vinelandii (strain DJ / ATCC BAA-1303).